A 188-amino-acid chain; its full sequence is Apolipoprotein M (188 aa).

Positions 1-22 form a signal peptide, not cleaved; the sequence is MFHQIWAALLYFYGIILNSIYQ. Disulfide bonds link cysteine 23–cysteine 167, cysteine 95–cysteine 183, and cysteine 128–cysteine 157. Asparagine 135 carries an N-linked (GlcNAc...) asparagine glycan. Tetradecanoate-binding residues include glutamate 136 and arginine 143.

The protein belongs to the calycin superfamily. Lipocalin family. Highly divergent. As to quaternary structure, interacts with LRP2; LRP2 mediates APOM renal uptake and subsequent lysosomal degradation.

The protein localises to the secreted. In terms of biological role, probably involved in lipid transport. Can bind sphingosine-1-phosphate, myristic acid, palmitic acid and stearic acid, retinol, all-trans-retinoic acid and 9-cis-retinoic acid. The chain is Apolipoprotein M (APOM) from Pongo abelii (Sumatran orangutan).